Here is a 419-residue protein sequence, read N- to C-terminus: AT-hook motif nuclear-localized protein 4 (419 aa).

Disordered regions lie at residues 1–168 (MEER…SGGG), 301–337 (QQQQ…DPKA), and 382–419 (DLFS…EVPS). The short motif at 78-86 (KKKRGRPRK) is the Bipartite nuclear localization signal element. A DNA-binding region (a.T hook) is located at residues 78-90 (KKKRGRPRKYNPD). A compositionally biased stretch (polar residues) spans 101-112 (PISSSVPLTSEF). Over residues 115–130 (RKRGRGRGRGRGRGRG) the composition is skewed to basic residues. Low complexity predominate over residues 136–148 (GSREPNNNNNDNN). The 141-residue stretch at 174–314 (VSPSFTPHVL…QQIKKQRRER (141 aa)) folds into the PPC domain. The span at 318 to 328 (PTTTQASNISF) shows a compositional bias: polar residues. Acidic residues predominate over residues 391–406 (DREEDEDDLEGEDDEE).

In terms of assembly, homodimer. Interacts with AHL3. In terms of tissue distribution, predominantly expressed in the stele of the root meristem with a specificity to the procambium.

The protein resides in the nucleus. Transcription factor that specifically binds AT-rich DNA sequences related to the nuclear matrix attachment regions (MARs). Acts redundantly with AHL3 to regulate the formation of tissue boundary between the xylem and procambium in the root meristem. Cell-to-cell movement of AHL4 from the procambium to the xylem is critical for its function in root vascular patterning. The chain is AT-hook motif nuclear-localized protein 4 from Arabidopsis thaliana (Mouse-ear cress).